A 343-amino-acid chain; its full sequence is Glycerol-3-phosphate dehydrogenase [NAD(P)+] (343 aa).

NADPH contacts are provided by W29, R49, and K122. Residues K122, G150, and S152 each contribute to the sn-glycerol 3-phosphate site. NADPH is bound at residue A154. K205, D258, S268, R269, and N270 together coordinate sn-glycerol 3-phosphate. K205 acts as the Proton acceptor in catalysis. R269 lines the NADPH pocket. NADPH is bound by residues L288 and E290.

The protein belongs to the NAD-dependent glycerol-3-phosphate dehydrogenase family.

It localises to the cytoplasm. The enzyme catalyses sn-glycerol 3-phosphate + NAD(+) = dihydroxyacetone phosphate + NADH + H(+). It carries out the reaction sn-glycerol 3-phosphate + NADP(+) = dihydroxyacetone phosphate + NADPH + H(+). It functions in the pathway membrane lipid metabolism; glycerophospholipid metabolism. Catalyzes the reduction of the glycolytic intermediate dihydroxyacetone phosphate (DHAP) to sn-glycerol 3-phosphate (G3P), the key precursor for phospholipid synthesis. In Mesorhizobium japonicum (strain LMG 29417 / CECT 9101 / MAFF 303099) (Mesorhizobium loti (strain MAFF 303099)), this protein is Glycerol-3-phosphate dehydrogenase [NAD(P)+].